The sequence spans 70 residues: Large ribosomal subunit protein bL31 (70 aa).

Residues C16, C18, C37, and C40 each contribute to the Zn(2+) site.

Belongs to the bacterial ribosomal protein bL31 family. Type A subfamily. In terms of assembly, part of the 50S ribosomal subunit. Zn(2+) serves as cofactor.

Its function is as follows. Binds the 23S rRNA. This is Large ribosomal subunit protein bL31 from Enterobacter sp. (strain 638).